We begin with the raw amino-acid sequence, 263 residues long: Small ribosomal subunit protein eS1 (263 aa).

The interval 235–263 (HGEGGGGKGEAGDKSERPEGYEPPVQESV) is disordered. Residues 244–254 (EAGDKSERPEG) show a composition bias toward basic and acidic residues.

Belongs to the eukaryotic ribosomal protein eS1 family. In terms of assembly, component of the small ribosomal subunit. Mature ribosomes consist of a small (40S) and a large (60S) subunit. The 40S subunit contains about 33 different proteins and 1 molecule of RNA (18S). The 60S subunit contains about 49 different proteins and 3 molecules of RNA (28S, 5.8S and 5S).

It localises to the cytoplasm. The polypeptide is Small ribosomal subunit protein eS1 (Bombyx mori (Silk moth)).